Reading from the N-terminus, the 393-residue chain is 6-hydroxy-3-succinoylpyridine 3-monooxygenase HspB (393 aa).

Residues 6 to 35 (RVII…VLEA) and 277 to 287 (MRNGRVILIGD) contribute to the FAD site.

This sequence belongs to the PheA/TfdB FAD monooxygenase family. In terms of assembly, homodimer. It depends on FAD as a cofactor.

It catalyses the reaction 4-(6-hydroxypyridin-3-yl)-4-oxobutanoate + 2 NADH + O2 + 2 H(+) = 2,5-dihydroxypyridine + succinate semialdehyde + 2 NAD(+) + H2O. Its pathway is alkaloid degradation; nicotine degradation. With respect to regulation, inhibited by Cu(2+) and Zn(2+). In terms of biological role, involved in the nicotine degradation. Catalyzes the cleavage of 6-hydroxy-3-succinoylpyridine (HSP) by incorporation of oxygen at the 3-position to produce to 2,5-dihydroxypyridine (DHP) and succinic semialdehyde. The sequence is that of 6-hydroxy-3-succinoylpyridine 3-monooxygenase HspB from Pseudomonas putida (strain DSM 28022 / S16).